The chain runs to 256 residues: Phosphatidylglycerol--prolipoprotein diacylglyceryl transferase 2 (256 aa).

3 helical membrane passes run 11–31, 46–66, and 83–103; these read LKIY…TLLF, FNAT…LYII, and FGNG…IALC. Position 130 (Arg-130) interacts with a 1,2-diacyl-sn-glycero-3-phospho-(1'-sn-glycerol). A run of 3 helical transmembrane segments spans residues 142-162, 164-184, and 221-241; these read AETT…PAGV, LYPT…FLLW, and VGLL…GILL.

The protein belongs to the Lgt family.

The protein resides in the cell membrane. The enzyme catalyses L-cysteinyl-[prolipoprotein] + a 1,2-diacyl-sn-glycero-3-phospho-(1'-sn-glycerol) = an S-1,2-diacyl-sn-glyceryl-L-cysteinyl-[prolipoprotein] + sn-glycerol 1-phosphate + H(+). It participates in protein modification; lipoprotein biosynthesis (diacylglyceryl transfer). Catalyzes the transfer of the diacylglyceryl group from phosphatidylglycerol to the sulfhydryl group of the N-terminal cysteine of a prolipoprotein, the first step in the formation of mature lipoproteins. This Clostridium perfringens (strain 13 / Type A) protein is Phosphatidylglycerol--prolipoprotein diacylglyceryl transferase 2.